The following is a 541-amino-acid chain: 2-succinyl-5-enolpyruvyl-6-hydroxy-3-cyclohexene-1-carboxylate synthase (541 aa).

This sequence belongs to the TPP enzyme family. MenD subfamily. Homodimer. The cofactor is Mg(2+). Mn(2+) is required as a cofactor. Requires thiamine diphosphate as cofactor.

It catalyses the reaction isochorismate + 2-oxoglutarate + H(+) = 5-enolpyruvoyl-6-hydroxy-2-succinyl-cyclohex-3-ene-1-carboxylate + CO2. It functions in the pathway quinol/quinone metabolism; 1,4-dihydroxy-2-naphthoate biosynthesis; 1,4-dihydroxy-2-naphthoate from chorismate: step 2/7. The protein operates within quinol/quinone metabolism; menaquinone biosynthesis. Its function is as follows. Catalyzes the thiamine diphosphate-dependent decarboxylation of 2-oxoglutarate and the subsequent addition of the resulting succinic semialdehyde-thiamine pyrophosphate anion to isochorismate to yield 2-succinyl-5-enolpyruvyl-6-hydroxy-3-cyclohexene-1-carboxylate (SEPHCHC). The sequence is that of 2-succinyl-5-enolpyruvyl-6-hydroxy-3-cyclohexene-1-carboxylate synthase from Leuconostoc citreum (strain KM20).